The following is a 569-amino-acid chain: Urease subunit beta (569 aa).

One can recognise a Urease domain in the interval G131–F569. Ni(2+)-binding residues include H136, H138, and K219. K219 carries the N6-carboxylysine modification. A substrate-binding site is contributed by H221. The Ni(2+) site is built by H248 and H274. H322 (proton donor) is an active-site residue. D362 contributes to the Ni(2+) binding site.

It belongs to the metallo-dependent hydrolases superfamily. Urease alpha subunit family. Heterohexamer of 3 UreA (alpha) and 3 UreB (beta) subunits. Requires Ni cation as cofactor. Post-translationally, carboxylation allows a single lysine to coordinate two nickel ions.

Its subcellular location is the cytoplasm. The catalysed reaction is urea + 2 H2O + H(+) = hydrogencarbonate + 2 NH4(+). It functions in the pathway nitrogen metabolism; urea degradation; CO(2) and NH(3) from urea (urease route): step 1/1. The sequence is that of Urease subunit beta from Helicobacter pylori (strain Shi470).